A 588-amino-acid chain; its full sequence is Arginine--tRNA ligase (588 aa).

The 'HIGH' region signature appears at 126 to 136 (PNIAKEMHVGH).

This sequence belongs to the class-I aminoacyl-tRNA synthetase family. In terms of assembly, monomer.

It localises to the cytoplasm. It catalyses the reaction tRNA(Arg) + L-arginine + ATP = L-arginyl-tRNA(Arg) + AMP + diphosphate. The sequence is that of Arginine--tRNA ligase from Nostoc sp. (strain PCC 7120 / SAG 25.82 / UTEX 2576).